Reading from the N-terminus, the 212-residue chain is MQLFHLCLIIFCSCPTVQASKLCLGWLWGMDIDPYKEFGASVELLSFLPSDFFPSVRDLLDTASALYRDALESPEHCTPNHTALRQAILCWGELMTLASWVGNNLEDPAARDLVVNYVNTNMGLKIRQLLWFHISCLTFGRETVLEYLVSFGVWIRTPPAYRPPNAPILSTLPETTVVRRRGRSPRRRTPSPRRRRSQSPRRRRSQSPASQC.

Positions 1–19 (MQLFHLCLIIFCSCPTVQA) are cleaved as a signal peptide. Residues 25–27 (GWL) are HBEAG. A disordered region spans residues 165 to 212 (NAPILSTLPETTVVRRRGRSPRRRTPSPRRRRSQSPRRRRSQSPASQC). Basic residues predominate over residues 178 to 205 (VRRRGRSPRRRTPSPRRRRSQSPRRRRS). 3 consecutive repeat copies span residues 184–190 (SPRRRTP), 191–198 (SPRRRRSQ), and 199–206 (SPRRRRSQ). Residues 184 to 206 (SPRRRTPSPRRRRSQSPRRRRSQ) form a 3 X 8 AA repeats of S-P-R-R-R-R-S-Q region. A propeptide spanning residues 184–212 (SPRRRTPSPRRRRSQSPRRRRSQSPASQC) is cleaved from the precursor.

The protein belongs to the orthohepadnavirus precore antigen family. Homodimerizes. Phosphorylated. In terms of processing, cleaved by host furin.

The protein localises to the secreted. The protein resides in the host nucleus. Its function is as follows. May regulate immune response to the intracellular capsid in acting as a T-cell tolerogen, by having an immunoregulatory effect which prevents destruction of infected cells by cytotoxic T-cells. This immune regulation may predispose to chronicity during perinatal infections and prevent severe liver injury during adult infections. This is External core antigen from Hepatitis B virus genotype F2 (isolate Brazil/w4B) (HBV-F).